A 156-amino-acid chain; its full sequence is ATP synthase subunit b (156 aa).

Residues 12-32 (VAFFIFVLFCMKFVWPPVIAA) traverse the membrane as a helical segment.

It belongs to the ATPase B chain family. In terms of assembly, F-type ATPases have 2 components, F(1) - the catalytic core - and F(0) - the membrane proton channel. F(1) has five subunits: alpha(3), beta(3), gamma(1), delta(1), epsilon(1). F(0) has three main subunits: a(1), b(2) and c(10-14). The alpha and beta chains form an alternating ring which encloses part of the gamma chain. F(1) is attached to F(0) by a central stalk formed by the gamma and epsilon chains, while a peripheral stalk is formed by the delta and b chains.

The protein resides in the cell inner membrane. Its function is as follows. F(1)F(0) ATP synthase produces ATP from ADP in the presence of a proton or sodium gradient. F-type ATPases consist of two structural domains, F(1) containing the extramembraneous catalytic core and F(0) containing the membrane proton channel, linked together by a central stalk and a peripheral stalk. During catalysis, ATP synthesis in the catalytic domain of F(1) is coupled via a rotary mechanism of the central stalk subunits to proton translocation. Component of the F(0) channel, it forms part of the peripheral stalk, linking F(1) to F(0). The chain is ATP synthase subunit b from Pseudomonas syringae pv. syringae (strain B728a).